Reading from the N-terminus, the 440-residue chain is Ferredoxin--NADP reductase (440 aa).

In terms of domain architecture, CpcD-like spans 17–75 (SRVFVYEVVGMRQNEETDQTNYPIRKSGSVFIRVPYNRMNQEMQRITRLGGKIVSIQTV). A disordered region spans residues 93 to 142 (ASSETAKSEGNGKATPVKTDSGAKGFAKPPAEEQLKKKDNKGNTMTQAKA). Positions 122–133 (PAEEQLKKKDNK) are enriched in basic and acidic residues. The FAD-binding FR-type domain maps to 155–279 (NAPFIGKVIS…TGPVGKEMLL (125 aa)). FAD contacts are provided by residues 214–217 (RLYS), 235–237 (CVR), Y241, 253–255 (VCS), and T294. The NADP(+) site is built by S217 and R237. Residues T294, 330–331 (VP), 360–361 (SR), 370–374 (RMYIQ), 399–400 (GL), and E438 contribute to the NADP(+) site.

The protein belongs to the ferredoxin--NADP reductase type 1 family. FAD is required as a cofactor.

The protein localises to the cellular thylakoid membrane. The enzyme catalyses 2 reduced [2Fe-2S]-[ferredoxin] + NADP(+) + H(+) = 2 oxidized [2Fe-2S]-[ferredoxin] + NADPH. The chain is Ferredoxin--NADP reductase (petH) from Trichormus variabilis (strain ATCC 29413 / PCC 7937) (Anabaena variabilis).